The chain runs to 331 residues: MTTGPFVPNPTIDPKSLGKVGVLMGGRSAEREISLMSGNGVLAALRARGVDAHAFDPGLQAVADLAKQGFDRVVISLHGRFGEDGTIQGLLEQFGIPYTGSGVLASALAMDKEATKRQWQTHGLPTPDFVMLHAGADWQAVADRLGLPLIVKPAREGSSIGLTKVTSVAELPAAYEKAARLDRDVMAEQFIEGDELTCPIIGEGESATALPLIRIVAPQANYDYQNKYFTDDTRYECPAPIPADVAARVQALVVQAYRGLGCRGWGRADIMLRKSDNAPFLLEMNTSPGMTGHSLVPMGARAAGISYEDFVLQLAASASLELHASTDWKPE.

Residues 116–316 (KRQWQTHGLP…YEDFVLQLAA (201 aa)) enclose the ATP-grasp domain. 142–197 (ADRLGLPLIVKPAREGSSIGLTKVTSVAELPAAYEKAARLDRDVMAEQFIEGDELT) serves as a coordination point for ATP. Mg(2+)-binding residues include D269, E283, and N285.

It belongs to the D-alanine--D-alanine ligase family. Mg(2+) serves as cofactor. It depends on Mn(2+) as a cofactor.

It localises to the cytoplasm. It carries out the reaction 2 D-alanine + ATP = D-alanyl-D-alanine + ADP + phosphate + H(+). The protein operates within cell wall biogenesis; peptidoglycan biosynthesis. Its function is as follows. Cell wall formation. This chain is D-alanine--D-alanine ligase, found in Ralstonia pickettii (strain 12J).